Consider the following 157-residue polypeptide: Cytochrome c-type biogenesis protein CcmE (157 aa).

Residues 1–7 (MTPRQRR) are Cytoplasmic-facing. Residues 8–28 (LGLLAAALACCGVAAALVLNA) traverse the membrane as a helical; Signal-anchor for type II membrane protein segment. Over 29-157 (FRANLVFFFS…GAMAAQELRR (129 aa)) the chain is Periplasmic. Heme is bound by residues H123 and Y127.

It belongs to the CcmE/CycJ family.

It localises to the cell inner membrane. Functionally, heme chaperone required for the biogenesis of c-type cytochromes. Transiently binds heme delivered by CcmC and transfers the heme to apo-cytochromes in a process facilitated by CcmF and CcmH. In Cupriavidus taiwanensis (strain DSM 17343 / BCRC 17206 / CCUG 44338 / CIP 107171 / LMG 19424 / R1) (Ralstonia taiwanensis (strain LMG 19424)), this protein is Cytochrome c-type biogenesis protein CcmE.